The primary structure comprises 154 residues: UPF0178 protein YaiI (154 aa).

Belongs to the UPF0178 family.

The chain is UPF0178 protein YaiI from Escherichia fergusonii (strain ATCC 35469 / DSM 13698 / CCUG 18766 / IAM 14443 / JCM 21226 / LMG 7866 / NBRC 102419 / NCTC 12128 / CDC 0568-73).